A 415-amino-acid polypeptide reads, in one-letter code: MSGTTLLIHDLEAAVSPKGSGPLRGRDLGELEVCSPASIAVSGDRIAAVGPPGEVLRDHPPGPGCETVDGRGKAALPGLVDCHTHAAFLGDRADEFELRCRGAGYEEIHASGGGILSTVRATRAGSEEELRAATERHLDWLLRHGTTTAEVKSGYGLDREAELRLLRAIRAAGDAHPVDVRPTFLGAHTVPPEFSGAAEYVEFVVAEVLPEAAPLAEAADVFVERGSFEVPEARRYLEACAGYGLALRLHADQFSERGAVPLAVELGARSADHLESTGGEGVRALGQSATAAVLLPACALFLGLPDPPARALLEAGAIVALATDFNPGSSFCSSLPVVLNLACTRLGLSPAEALCAATANAAYVLGLEGEVGRLSAGYRADILLLDAPDWRYIAYHLGGDHLAAVVKSGGLLPPG.

Positions 83 and 85 each coordinate Fe(3+). Residues His-83 and His-85 each contribute to the Zn(2+) site. 4-imidazolone-5-propanoate is bound by residues Arg-92, Tyr-155, and His-188. Tyr-155 is a binding site for N-formimidoyl-L-glutamate. A Fe(3+)-binding site is contributed by His-250. Residue His-250 coordinates Zn(2+). Residue Gln-253 coordinates 4-imidazolone-5-propanoate. Asp-324 lines the Fe(3+) pocket. Zn(2+) is bound at residue Asp-324. N-formimidoyl-L-glutamate-binding residues include Asn-326 and Gly-328. Ser-329 provides a ligand contact to 4-imidazolone-5-propanoate.

The protein belongs to the metallo-dependent hydrolases superfamily. HutI family. Zn(2+) serves as cofactor. It depends on Fe(3+) as a cofactor.

It localises to the cytoplasm. It catalyses the reaction 4-imidazolone-5-propanoate + H2O = N-formimidoyl-L-glutamate. The protein operates within amino-acid degradation; L-histidine degradation into L-glutamate; N-formimidoyl-L-glutamate from L-histidine: step 3/3. Its function is as follows. Catalyzes the hydrolytic cleavage of the carbon-nitrogen bond in imidazolone-5-propanoate to yield N-formimidoyl-L-glutamate. It is the third step in the universal histidine degradation pathway. The chain is Imidazolonepropionase from Rubrobacter xylanophilus (strain DSM 9941 / JCM 11954 / NBRC 16129 / PRD-1).